We begin with the raw amino-acid sequence, 387 residues long: 8-amino-7-oxononanoate synthase (387 aa).

Positions 31 and 38 each coordinate substrate. 118-119 is a pyridoxal 5'-phosphate binding site; sequence GY. Residue H143 coordinates substrate. Pyridoxal 5'-phosphate-binding positions include S191, 216-219, and 236-239; these read DDAH and TLSK. N6-(pyridoxal phosphate)lysine is present on K239. T348 contacts substrate.

This sequence belongs to the class-II pyridoxal-phosphate-dependent aminotransferase family. BioF subfamily. Homodimer. The cofactor is pyridoxal 5'-phosphate.

It carries out the reaction 6-carboxyhexanoyl-[ACP] + L-alanine + H(+) = (8S)-8-amino-7-oxononanoate + holo-[ACP] + CO2. The protein operates within cofactor biosynthesis; biotin biosynthesis. In terms of biological role, catalyzes the decarboxylative condensation of pimeloyl-[acyl-carrier protein] and L-alanine to produce 8-amino-7-oxononanoate (AON), [acyl-carrier protein], and carbon dioxide. The protein is 8-amino-7-oxononanoate synthase of Methylorubrum populi (strain ATCC BAA-705 / NCIMB 13946 / BJ001) (Methylobacterium populi).